A 260-amino-acid chain; its full sequence is tRNA pseudouridine synthase A (260 aa).

Asp-52 acts as the Nucleophile in catalysis. A substrate-binding site is contributed by Tyr-110.

The protein belongs to the tRNA pseudouridine synthase TruA family. In terms of assembly, homodimer.

It carries out the reaction uridine(38/39/40) in tRNA = pseudouridine(38/39/40) in tRNA. Formation of pseudouridine at positions 38, 39 and 40 in the anticodon stem and loop of transfer RNAs. In Spiroplasma kunkelii, this protein is tRNA pseudouridine synthase A.